The following is a 313-amino-acid chain: Guanine nucleotide-binding protein-like 3-like protein (313 aa).

Basic residues predominate over residues methionine 1–threonine 14. Positions methionine 1–lysine 41 are disordered. The span at arginine 15–asparagine 27 shows a compositional bias: basic and acidic residues. GTP is bound by residues serine 95–aspartate 98, glycine 178–asparagine 185, and threonine 212–serine 215.

This sequence belongs to the MMR1/HSR1 GTP-binding protein family.

It localises to the nucleus. It is found in the nucleolus. Required for normal processing of ribosomal pre-rRNA. Required for cell proliferation. Binds GTP. This is Guanine nucleotide-binding protein-like 3-like protein from Encephalitozoon cuniculi (strain GB-M1) (Microsporidian parasite).